Here is a 541-residue protein sequence, read N- to C-terminus: DEAD-box ATP-dependent RNA helicase 57 (541 aa).

A compositionally biased stretch (acidic residues) spans 43-52; the sequence is VEEEEDTEQP. The tract at residues 43 to 72 is disordered; that stretch reads VEEEEDTEQPEAEKVIVSSKKRKRRSSNSV. Positions 141–169 match the Q motif motif; that stretch reads ELSSRYGCEGYILRNLAELGFKEPTPIQR. The 171-residue stretch at 172–342 folds into the Helicase ATP-binding domain; the sequence is IPILLSGREC…RSIMHDAVRV (171 aa). 185 to 192 lines the ATP pocket; sequence APTGSGKT. The short motif at 289–292 is the DEAD box element; the sequence is DESD. Residues 370-514 form the Helicase C-terminal domain; sequence ALRQSFAESL…EVPSWIMSLK (145 aa). The segment at 517-541 is disordered; the sequence is KWRKHRPRRDSISTKPKADKNDTDE. A compositionally biased stretch (basic and acidic residues) spans 525–541; the sequence is RDSISTKPKADKNDTDE.

Belongs to the DEAD box helicase family. DDX52/ROK1 subfamily.

It catalyses the reaction ATP + H2O = ADP + phosphate + H(+). This chain is DEAD-box ATP-dependent RNA helicase 57 (RH57), found in Arabidopsis thaliana (Mouse-ear cress).